The chain runs to 325 residues: uncharacterized protein (325 aa).

The interval 296–325 is disordered; that stretch reads QRTLSSSMEEADRPRRMSVTQPHLPPVPSA.

Belongs to the NDRG family.

This is an uncharacterized protein from Caenorhabditis elegans.